A 273-amino-acid polypeptide reads, in one-letter code: MTISSNIATDFTDKQAVKVITGLNNFKIQQIKQMTQASEIAGATYLDIAADINIIEEIRSTSTIPICVSAITAEELVHCQQAGVQILEIGNYDAFYEQGRLFSSREIMEISQNTRERLPETTLCVTIPHILCIEEQIKLTQDLQNIGVDIIQTEGKSTSFSKQGDLSGIIQKSASTCSSTYAISKNSNIPIISASGISALTSPISFLYGASCIGISTNIKRLNNVASMVMYIYEIKTAIEYNRGVKKDINHSIRKSIINCQLGYYDLRMESHV.

It belongs to the ycf23 family.

The protein resides in the plastid. It is found in the chloroplast. This is an uncharacterized protein from Pyropia yezoensis (Susabi-nori).